Consider the following 216-residue polypeptide: Invasion protein InvF (216 aa).

Positions 112-210 (YWLVGYLLAQ…GVSPRKLSNI (99 aa)) constitute an HTH araC/xylS-type domain. 2 DNA-binding regions (H-T-H motif) span residues 129-150 (RMLG…SRAL) and 177-200 (ITQL…KELI).

In terms of biological role, transcriptional regulator required for the expression of several genes encoding type III secretion system SPI1 effector proteins. The interaction with SicA is necessary for the activation of sigDE (sopB pipC), sicAsipBCDA, and sopE. The chain is Invasion protein InvF (invF) from Salmonella typhi.